A 437-amino-acid polypeptide reads, in one-letter code: Trigger factor (437 aa).

The PPIase FKBP-type domain occupies 165-251 (GDLVVIDFKG…LHTIKEKEKI (87 aa)).

This sequence belongs to the FKBP-type PPIase family. Tig subfamily.

It localises to the cytoplasm. The catalysed reaction is [protein]-peptidylproline (omega=180) = [protein]-peptidylproline (omega=0). Involved in protein export. Acts as a chaperone by maintaining the newly synthesized protein in an open conformation. Functions as a peptidyl-prolyl cis-trans isomerase. The protein is Trigger factor of Nitratiruptor sp. (strain SB155-2).